The chain runs to 265 residues: Hydroxyethylthiazole kinase 2 (265 aa).

Residue methionine 39 coordinates substrate. Positions 115 and 168 each coordinate ATP. Glycine 195 is a binding site for substrate.

This sequence belongs to the Thz kinase family. Mg(2+) serves as cofactor.

It carries out the reaction 5-(2-hydroxyethyl)-4-methylthiazole + ATP = 4-methyl-5-(2-phosphooxyethyl)-thiazole + ADP + H(+). The protein operates within cofactor biosynthesis; thiamine diphosphate biosynthesis; 4-methyl-5-(2-phosphoethyl)-thiazole from 5-(2-hydroxyethyl)-4-methylthiazole: step 1/1. Functionally, catalyzes the phosphorylation of the hydroxyl group of 4-methyl-5-beta-hydroxyethylthiazole (THZ). This Clostridium botulinum (strain Langeland / NCTC 10281 / Type F) protein is Hydroxyethylthiazole kinase 2.